Consider the following 621-residue polypeptide: Exonuclease 3'-5' domain-containing protein 2 (621 aa).

Topologically, residues 1 to 4 (MSRQ) are mitochondrial intermembrane. A helical transmembrane segment spans residues 5–25 (NLVALTVTTLLGVAVGGFVLW). Over 26–621 (KGIQRRRRSK…FGEDLPIQLS (596 aa)) the chain is Cytoplasmic. The disordered stretch occupies residues 34–68 (SKTSPVTQQPQQKVLGSRELPPPEDDQLHSSAPRS). Over residues 36-47 (TSPVTQQPQQKV) the composition is skewed to polar residues. 3 residues coordinate a divalent metal cation: Asp108, Glu110, and Asp246. Residues 155–247 (ILADGTILKV…DQVIYAARDA (93 aa)) enclose the 3'-5' exonuclease domain. Positions 299–343 (RLGEEVNGEATESQQKPRNKKSKMDGMVPGNHQGRDPRKHKRKPL) are disordered.

The protein belongs to the EXD2 family. In terms of assembly, homodimer. Interacts with RBBP8, MRE11 and BRCA1. Mg(2+) serves as cofactor. Requires Mn(2+) as cofactor.

The protein resides in the mitochondrion outer membrane. Its subcellular location is the mitochondrion matrix. The protein localises to the nucleus. It localises to the chromosome. The enzyme catalyses Exonucleolytic cleavage in the 3'- to 5'-direction to yield nucleoside 5'-phosphates.. Its function is as follows. Exonuclease that has both 3'-5' exoribonuclease and exodeoxyribonuclease activities, depending on the divalent metal cation used as cofactor. In presence of Mg(2+), only shows 3'-5' exoribonuclease activity, while it shows both exoribonuclease and exodeoxyribonuclease activities in presence of Mn(2+). Acts as an exoribonuclease in mitochondrion, possibly by regulating ATP production and mitochondrial translation. Also involved in the response to DNA damage. Acts as 3'-5' exodeoxyribonuclease for double-strand breaks resection and efficient homologous recombination. Plays a key role in controlling the initial steps of chromosomal break repair, it is recruited to chromatin in a damage-dependent manner and functionally interacts with the MRN complex to accelerate resection through its 3'-5' exonuclease activity, which efficiently processes double-stranded DNA substrates containing nicks. Also involved in response to replicative stress: recruited to stalled forks and is required to stabilize and restart stalled replication forks by restraining excessive fork regression, thereby suppressing their degradation. The sequence is that of Exonuclease 3'-5' domain-containing protein 2 from Homo sapiens (Human).